Consider the following 484-residue polypeptide: Sperm-associated antigen 8 (484 aa).

The span at 1 to 11 (METSESTDRSQ) shows a compositional bias: basic and acidic residues. Disordered regions lie at residues 1-32 (METS…DPFS), 123-221 (DLSS…SAPV), and 324-348 (LQPQ…SHCQ). 2 stretches are compositionally biased toward low complexity: residues 20–32 (SSDG…DPFS) and 125–160 (SSSR…SSSS). Positions 161–195 (GPGGSPGGSGRGPGHGPGPGGGSGQGPGGGSGQGT) are enriched in gly residues. Polar residues predominate over residues 324-339 (LQPQSPTSSCTTQKDS). Mn stretches follow at residues 332–345 (SCTT…PPKS) and 384–398 (ESVT…LVQA). Residues 455–484 (PLPFEPESYSQHGEISSLACQGGGQGGGGG) form a disordered region. Residues 475-484 (QGGGQGGGGG) are compositionally biased toward gly residues.

Belongs to the SPAG8 family. Microtubule inner protein component of sperm flagellar doublet microtubules. Interacts with FHL5 (via second LIM domain). Interacts with RANBP9. In terms of tissue distribution, expressed in trachea multiciliated cells.

It is found in the cytoplasm. Its subcellular location is the nucleus. The protein localises to the cytoplasmic vesicle. It localises to the secretory vesicle. The protein resides in the acrosome. It is found in the cytoskeleton. Its subcellular location is the microtubule organizing center. The protein localises to the spindle. It localises to the cilium axoneme. The protein resides in the flagellum axoneme. In terms of biological role, microtubule inner protein (MIP) part of the dynein-decorated doublet microtubules (DMTs) in cilia axoneme, which is required for motile cilia beating. Plays a role in spermatogenesis by enhancing the binding of CREM isoform tau to its coactivator FHL5 and increasing the FHL5-regulated transcriptional activation of CREM isoform tau. Involved in the acrosome reaction and in binding of sperm to the zona pellucida. Plays a role in regulation of the cell cycle by controlling progression through the G2/M phase, possibly by delaying the activation of CDK1 which is required for entry into mitosis. May play a role in fertility and microtubule formation through interaction with RANBP9. In Bos taurus (Bovine), this protein is Sperm-associated antigen 8 (SPAG8).